The following is a 275-amino-acid chain: Large ribosomal subunit protein uL2 (275 aa).

Residues 219–263 (EVRGAAMNPRDHPHGGGEGRAPRGMPTPKTKWGKPARGVKTRHNP) are disordered. The span at 227–239 (PRDHPHGGGEGRA) shows a compositional bias: basic and acidic residues. Basic residues predominate over residues 249 to 262 (KWGKPARGVKTRHN).

Belongs to the universal ribosomal protein uL2 family. As to quaternary structure, part of the 50S ribosomal subunit. Forms a bridge to the 30S subunit in the 70S ribosome.

Functionally, one of the primary rRNA binding proteins. Required for association of the 30S and 50S subunits to form the 70S ribosome, for tRNA binding and peptide bond formation. It has been suggested to have peptidyltransferase activity; this is somewhat controversial. Makes several contacts with the 16S rRNA in the 70S ribosome. In Roseiflexus castenholzii (strain DSM 13941 / HLO8), this protein is Large ribosomal subunit protein uL2.